Consider the following 277-residue polypeptide: 14-3-3 protein (277 aa).

A disordered region spans residues 252–277; sequence LQTQEQQQQPVGEGAEAPKVEATEQQ. Residues 267–277 show a composition bias toward basic and acidic residues; the sequence is EAPKVEATEQQ.

The protein belongs to the 14-3-3 family.

The chain is 14-3-3 protein from Eimeria tenella (Coccidian parasite).